A 594-amino-acid polypeptide reads, in one-letter code: RAS guanyl-releasing protein 2-B (594 aa).

The 119-residue stretch at 3–121 folds into the N-terminal Ras-GEF domain; sequence SSDLDKGLTI…SLIDIESVPS (119 aa). The Ras-GEF domain maps to 149–382; that stretch reads DPAELAEHLT…YQLSLQREPR (234 aa). The interval 377–403 is disordered; sequence LQREPRARSTQTHAKSPPSPSPPLEEW. 2 EF-hand domains span residues 418–453 and 455–482; these read HIEK…FPYL and AFNE…ASSV. Positions 431, 433, 435, 437, 442, 460, 462, 464, 466, and 471 each coordinate Ca(2+). The Phorbol-ester/DAG-type zinc-finger motif lies at 490 to 540; sequence IHNFAERTFLRPVSCQHCRNLILGIYKKGLKCKACGITCHKHCRDHLSIEC.

This sequence belongs to the RASGRP family.

It is found in the cytoplasm. The protein resides in the cytosol. It localises to the cell membrane. Its subcellular location is the synapse. The protein localises to the synaptosome. Its function is as follows. Functions as a calcium- and DAG-regulated nucleotide exchange factor specifically activating Rap through the exchange of bound GDP for GTP. May function in cell aggregation and adhesion. The protein is RAS guanyl-releasing protein 2-B (rasgrp2-b) of Xenopus laevis (African clawed frog).